Here is a 207-residue protein sequence, read N- to C-terminus: MIGRLRGNLLEKQPPELLIEVSGIGYEVQMPMSCFYELPEVGSEAIIYTHYVVREDAQLLYGFNTKNERALFREVIKANGVGPKLGLAILSGMTAAQFVQSVEREDISTLVKLPGVGKKTAERLVVEMKDRLKGWGAGDLFTPATDAAPMDDGSEFITSPQSAVDEAVSALIALGYKPQQASKTVSQIAKPDMTSEVLIRESLKSMI.

Residues 1 to 64 (MIGRLRGNLL…EDAQLLYGFN (64 aa)) are domain I. Positions 65 to 143 (TKNERALFRE…GWGAGDLFTP (79 aa)) are domain II. A flexible linker region spans residues 144-158 (ATDAAPMDDGSEFIT). The segment at 159–207 (SPQSAVDEAVSALIALGYKPQQASKTVSQIAKPDMTSEVLIRESLKSMI) is domain III.

Belongs to the RuvA family. Homotetramer. Forms an RuvA(8)-RuvB(12)-Holliday junction (HJ) complex. HJ DNA is sandwiched between 2 RuvA tetramers; dsDNA enters through RuvA and exits via RuvB. An RuvB hexamer assembles on each DNA strand where it exits the tetramer. Each RuvB hexamer is contacted by two RuvA subunits (via domain III) on 2 adjacent RuvB subunits; this complex drives branch migration. In the full resolvosome a probable DNA-RuvA(4)-RuvB(12)-RuvC(2) complex forms which resolves the HJ.

It is found in the cytoplasm. Its function is as follows. The RuvA-RuvB-RuvC complex processes Holliday junction (HJ) DNA during genetic recombination and DNA repair, while the RuvA-RuvB complex plays an important role in the rescue of blocked DNA replication forks via replication fork reversal (RFR). RuvA specifically binds to HJ cruciform DNA, conferring on it an open structure. The RuvB hexamer acts as an ATP-dependent pump, pulling dsDNA into and through the RuvAB complex. HJ branch migration allows RuvC to scan DNA until it finds its consensus sequence, where it cleaves and resolves the cruciform DNA. The polypeptide is Holliday junction branch migration complex subunit RuvA (Aliivibrio fischeri (strain ATCC 700601 / ES114) (Vibrio fischeri)).